The sequence spans 250 residues: 1-(5-phosphoribosyl)-5-[(5-phosphoribosylamino)methylideneamino] imidazole-4-carboxamide isomerase (250 aa).

Aspartate 8 functions as the Proton acceptor in the catalytic mechanism. The active-site Proton donor is the aspartate 129.

Belongs to the HisA/HisF family.

It localises to the cytoplasm. It carries out the reaction 1-(5-phospho-beta-D-ribosyl)-5-[(5-phospho-beta-D-ribosylamino)methylideneamino]imidazole-4-carboxamide = 5-[(5-phospho-1-deoxy-D-ribulos-1-ylimino)methylamino]-1-(5-phospho-beta-D-ribosyl)imidazole-4-carboxamide. The protein operates within amino-acid biosynthesis; L-histidine biosynthesis; L-histidine from 5-phospho-alpha-D-ribose 1-diphosphate: step 4/9. The chain is 1-(5-phosphoribosyl)-5-[(5-phosphoribosylamino)methylideneamino] imidazole-4-carboxamide isomerase from Desulfovibrio desulfuricans (strain ATCC 27774 / DSM 6949 / MB).